A 399-amino-acid chain; its full sequence is Elongation factor Tu (399 aa).

Positions 10-208 (KPHVNIGTIG…TVDSYIPEPE (199 aa)) constitute a tr-type G domain. Positions 19 to 26 (GHVDHGKT) are G1. 19 to 26 (GHVDHGKT) lines the GTP pocket. Thr-26 provides a ligand contact to Mg(2+). Residues 64–68 (GITIN) form a G2 region. Residues 85–88 (DAPG) are G3. Residues 85-89 (DAPGH) and 140-143 (NKVD) each bind GTP. The segment at 140-143 (NKVD) is G4. Positions 178–180 (SAL) are G5.

Belongs to the TRAFAC class translation factor GTPase superfamily. Classic translation factor GTPase family. EF-Tu/EF-1A subfamily. Monomer.

It is found in the cytoplasm. It carries out the reaction GTP + H2O = GDP + phosphate + H(+). In terms of biological role, GTP hydrolase that promotes the GTP-dependent binding of aminoacyl-tRNA to the A-site of ribosomes during protein biosynthesis. This is Elongation factor Tu from Streptococcus pyogenes serotype M12 (strain MGAS2096).